The primary structure comprises 121 residues: NAD(P)H-quinone oxidoreductase subunit 3, chloroplastic (121 aa).

Transmembrane regions (helical) follow at residues 10–30 (FWAF…VSNL), 65–85 (MFAL…PWAM), and 90–110 (LGII…IGLI).

Belongs to the complex I subunit 3 family. As to quaternary structure, NDH is composed of at least 16 different subunits, 5 of which are encoded in the nucleus.

It is found in the plastid. It localises to the chloroplast thylakoid membrane. The catalysed reaction is a plastoquinone + NADH + (n+1) H(+)(in) = a plastoquinol + NAD(+) + n H(+)(out). It carries out the reaction a plastoquinone + NADPH + (n+1) H(+)(in) = a plastoquinol + NADP(+) + n H(+)(out). In terms of biological role, NDH shuttles electrons from NAD(P)H:plastoquinone, via FMN and iron-sulfur (Fe-S) centers, to quinones in the photosynthetic chain and possibly in a chloroplast respiratory chain. The immediate electron acceptor for the enzyme in this species is believed to be plastoquinone. Couples the redox reaction to proton translocation, and thus conserves the redox energy in a proton gradient. The chain is NAD(P)H-quinone oxidoreductase subunit 3, chloroplastic from Staurastrum punctulatum (Green alga).